The sequence spans 132 residues: Ribonuclease P protein component (132 aa).

This sequence belongs to the RnpA family. As to quaternary structure, consists of a catalytic RNA component (M1 or rnpB) and a protein subunit.

The enzyme catalyses Endonucleolytic cleavage of RNA, removing 5'-extranucleotides from tRNA precursor.. In terms of biological role, RNaseP catalyzes the removal of the 5'-leader sequence from pre-tRNA to produce the mature 5'-terminus. It can also cleave other RNA substrates such as 4.5S RNA. The protein component plays an auxiliary but essential role in vivo by binding to the 5'-leader sequence and broadening the substrate specificity of the ribozyme. The protein is Ribonuclease P protein component of Micrococcus luteus (strain ATCC 4698 / DSM 20030 / JCM 1464 / CCM 169 / CCUG 5858 / IAM 1056 / NBRC 3333 / NCIMB 9278 / NCTC 2665 / VKM Ac-2230) (Micrococcus lysodeikticus).